We begin with the raw amino-acid sequence, 408 residues long: Alpha-2Da adrenergic receptor (408 aa).

At M1–S30 the chain is on the extracellular side. N-linked (GlcNAc...) asparagine glycosylation is found at N8 and N15. Residues A31–V55 form a helical membrane-spanning segment. Residues L56–L67 lie on the Cytoplasmic side of the membrane. The chain crosses the membrane as a helical span at residues F68–M93. Residues G94 to C103 lie on the Extracellular side of the membrane. C103 and C176 are joined by a disulfide. A helical transmembrane segment spans residues A104–L126. Residues D127–I147 lie on the Cytoplasmic side of the membrane. Residues K148–K170 form a helical membrane-spanning segment. Residues H171 to E181 lie on the Extracellular side of the membrane. The helical transmembrane segment at T182–C205 threads the bilayer. Residues K206–V332 are Cytoplasmic-facing. Residues F242–Q306 form a disordered region. Residues E260–A270 show a composition bias toward acidic residues. The span at R277–R286 shows a compositional bias: basic residues. The chain crosses the membrane as a helical span at residues L333–V356. At C357–K369 the chain is on the extracellular side. Residues L370 to N390 traverse the membrane as a helical segment. At R391–T408 the chain is on the cytoplasmic side.

The protein belongs to the G-protein coupled receptor 1 family. Adrenergic receptor subfamily. ADRA2D sub-subfamily.

It is found in the cell membrane. Functionally, alpha-2 adrenergic receptors mediate the catecholamine-induced inhibition of adenylate cyclase through the action of G proteins. The order of potency for this receptor is dexmedetomidine &gt; norepinephrine &gt; epinephrine &gt; oxymetazoline. This is Alpha-2Da adrenergic receptor (adra2da) from Danio rerio (Zebrafish).